Consider the following 822-residue polypeptide: AP-1 complex subunit gamma-1 (822 aa).

Residues 597–628 (EIVQTNGETEPAPLETKPPPSGPQPTSQANDL) are disordered. The 116-residue stretch at 702-817 (AGIPSITAYS…QDLAEVNNFP (116 aa)) folds into the GAE domain.

Belongs to the adaptor complexes large subunit family. Adaptor protein complex 1 (AP-1) is a heterotetramer composed of two large adaptins (gamma-type subunit AP1G1 and beta-type subunit AP1B1), a medium adaptin (mu-type subunit AP1M1 or AP1M2) and a small adaptin (sigma-type subunit AP1S1 or AP1S2 or AP1S3). Interacts (via GAE domain) with RABEP1. Interacts with SYNRG/gamma-synergin. Interacts with EPS15. Interacts (via GAE domain) with AP1AR (via coiled-coil domain). Interacts with CLN3 (via dileucine motif); this interaction facilitates lysosomal targeting. Interacts (via GAE domain) with AFTPH/aftiphilin; the interaction is required to recruit AFTPH/aftiphilin to the perinuclear region of the cell. As to expression, widely expressed.

The protein localises to the golgi apparatus. It localises to the cytoplasmic vesicle. Its subcellular location is the clathrin-coated vesicle membrane. The protein resides in the cytoplasm. It is found in the perinuclear region. The protein localises to the clathrin-coated vesicle. It localises to the membrane. Its subcellular location is the clathrin-coated pit. Its function is as follows. Subunit of clathrin-associated adaptor protein complex 1 that plays a role in protein sorting in the late-Golgi/trans-Golgi network (TGN) and/or endosomes. The AP complexes mediate both the recruitment of clathrin to membranes and the recognition of sorting signals within the cytosolic tails of transmembrane cargo molecules. In association with AFTPH/aftiphilin in the aftiphilin/p200/gamma-synergin complex, involved in the trafficking of transferrin from early to recycling endosomes, and the membrane trafficking of furin and the lysosomal enzyme cathepsin D between the trans-Golgi network (TGN) and endosomes. The sequence is that of AP-1 complex subunit gamma-1 (AP1G1) from Homo sapiens (Human).